Reading from the N-terminus, the 605-residue chain is Pyruvate decarboxylase 1 (605 aa).

Asp67 and His154 together coordinate substrate. The interval 432-514 (DSWFNCQKLR…FLINNGGYTI (83 aa)) is thiamine pyrophosphate binding. Positions 482, 509, and 511 each coordinate Mg(2+). Residue Glu515 participates in substrate binding.

This sequence belongs to the TPP enzyme family. As to quaternary structure, homotetramer. It depends on a metal cation as a cofactor. Requires thiamine diphosphate as cofactor.

The enzyme catalyses a 2-oxocarboxylate + H(+) = an aldehyde + CO2. This is Pyruvate decarboxylase 1 (PDC1) from Oryza sativa subsp. japonica (Rice).